Reading from the N-terminus, the 270-residue chain is GTP cyclohydrolase FolE2 2 (270 aa).

It belongs to the GTP cyclohydrolase IV family.

It carries out the reaction GTP + H2O = 7,8-dihydroneopterin 3'-triphosphate + formate + H(+). It functions in the pathway cofactor biosynthesis; 7,8-dihydroneopterin triphosphate biosynthesis; 7,8-dihydroneopterin triphosphate from GTP: step 1/1. In terms of biological role, converts GTP to 7,8-dihydroneopterin triphosphate. The protein is GTP cyclohydrolase FolE2 2 of Dechloromonas aromatica (strain RCB).